Reading from the N-terminus, the 543-residue chain is Reticulophagy regulator 2 (543 aa).

The next 3 helical transmembrane spans lie at 12–32 (AGGGPGMGLSLGLGLGLSLGM), 100–120 (SLRPFFLLSVSLLAYFLLDLW), and 204–224 (VPGIMISYIVLLSILLWPLVV). Over residues 254-265 (LHHKHDKRKRQG) the composition is skewed to basic residues. The disordered stretch occupies residues 254–287 (LHHKHDKRKRQGKNAPPGGDEPLAETESESEAEL). The segment covering 275-285 (PLAETESESEA) has biased composition (acidic residues). Position 279 is a phosphothreonine (T279). Phosphoserine is present on residues S281, S283, S291, and S311. T334 is subject to Phosphothreonine. Disordered stretches follow at residues 336–394 (VSED…DVAA) and 411–486 (HFNG…EEEA). S337, S344, S347, and S385 each carry phosphoserine. Pro residues predominate over residues 461–480 (APSPSILPPVPQDSPQPLPA). The LIR motif motif lies at 490 to 495 (EDFELL). Residues 504 to 543 (NAELGLEPETPPKPPDAPPLGPDIHSLVQSDQEAQAVAEP) form a disordered region. A compositionally biased stretch (pro residues) spans 512-524 (ETPPKPPDAPPLG).

The protein belongs to the RETREG family. As to quaternary structure, interacts with ATG8 family modifier proteins MAP1LC3A, MAP1LC3B, MAP1LC3C, GABARAP, GABARAPL1 and GABARAPL2. Shows higher affinity for GABARAPL1 than for MAP1LC3B. Interacts with CANX.

It localises to the endoplasmic reticulum membrane. Endoplasmic reticulum (ER)-anchored autophagy regulator which exists in an inactive state under basal conditions but is activated following cellular stress. When activated, induces ER fragmentation and mediates ER delivery into lysosomes through sequestration into autophagosomes via interaction with ATG8 family proteins. Required for collagen quality control in a LIR motif-independent manner. This Homo sapiens (Human) protein is Reticulophagy regulator 2.